The following is a 346-amino-acid chain: Fe(3+) ions import ATP-binding protein FbpC 2 (346 aa).

Residues 5–235 (LEVDGVDKSF…PVDVPTAEFI (231 aa)) form the ABC transporter domain. ATP is bound at residue 37 to 44 (GPSGCGKT).

Belongs to the ABC transporter superfamily. Fe(3+) ion importer (TC 3.A.1.10) family. In terms of assembly, the complex is composed of two ATP-binding proteins (FbpC), two transmembrane proteins (FbpB) and a solute-binding protein (FbpA).

The protein resides in the cell membrane. It carries out the reaction Fe(3+)(out) + ATP + H2O = Fe(3+)(in) + ADP + phosphate + H(+). Part of the ABC transporter complex FbpABC involved in Fe(3+) ions import. Responsible for energy coupling to the transport system. The polypeptide is Fe(3+) ions import ATP-binding protein FbpC 2 (Rhodococcus jostii (strain RHA1)).